The primary structure comprises 327 residues: MAEITATVRPTREEVVPSRKRVKLPAWLEVAKPRLIPLLLATTLGGMALSEGWPLSSPRLVCTLGGGALASAAAGVLNCLWEQDLDGRMARTSGRALPSGRLSPTSAFIGAIACTLAAAMLLVSGVNCLAAGLSLLGLCSYVLLYTALLKPRTSQNIVIGGVAGAIPPLVGAAAATGHVGLGGWWLFALVMVWTPAHFWALALLLREDYRAVGIPMLPVVKGPVVTARAIKTYGWITVLLSSLGVFALPSGGAFYGVMLLPYNARLLQLVDRLSLDPDSLVNAKALFRWSILYLFGVCLLLILSRTDLASGFTHQVIQLLSLPTGVH.

8 helical membrane passes run 35 to 55 (LIPL…GWPL), 60 to 80 (LVCT…LNCL), 106 to 126 (SAFI…VSGV), 129 to 149 (LAAG…TALL), 157 to 177 (IVIG…AATG), 185 to 205 (WLFA…ALLL), 234 to 254 (GWIT…GGAF), and 283 to 303 (AKAL…LLIL).

This sequence belongs to the UbiA prenyltransferase family. Protoheme IX farnesyltransferase subfamily.

The protein localises to the cell inner membrane. The enzyme catalyses heme b + (2E,6E)-farnesyl diphosphate + H2O = Fe(II)-heme o + diphosphate. The protein operates within porphyrin-containing compound metabolism; heme O biosynthesis; heme O from protoheme: step 1/1. Its function is as follows. Converts heme B (protoheme IX) to heme O by substitution of the vinyl group on carbon 2 of heme B porphyrin ring with a hydroxyethyl farnesyl side group. The sequence is that of Protoheme IX farnesyltransferase from Synechococcus sp. (strain CC9605).